A 306-amino-acid polypeptide reads, in one-letter code: MAFLEVSVQCQERSQARYEEVLESFGALAVTLLDADADTVRERGVFEPGVGETVLWDVVVLSALFPVETDALGLLAGLEGAEPGLDWGGVRFRVVVDEDWERVWMDQFQAMRFGERTFIVPWNQAVPVEASGMDAAVVRLDPGLAFGSGTHPTTGLCLRWLDRLGGDGVLGGGDVLDFGCGSGILALAALKLGAVYAVGVDNDPQALLASRENALRNRVAERLEVYLPAEAPVRRYPVVVANILASTLVALAERLAGYVAPGGRLALSGILRGEEEEVLRCYAVWLDVLGCEEEDGWIRIDGVRRC.

Residues Thr-154, Gly-179, Asp-201, and Asn-242 each coordinate S-adenosyl-L-methionine.

It belongs to the methyltransferase superfamily. PrmA family.

The protein resides in the cytoplasm. The catalysed reaction is L-lysyl-[protein] + 3 S-adenosyl-L-methionine = N(6),N(6),N(6)-trimethyl-L-lysyl-[protein] + 3 S-adenosyl-L-homocysteine + 3 H(+). Functionally, methylates ribosomal protein L11. In Xylella fastidiosa (strain Temecula1 / ATCC 700964), this protein is Ribosomal protein L11 methyltransferase.